A 323-amino-acid chain; its full sequence is Leucine-rich repeat-containing protein 46 (323 aa).

4 LRR repeats span residues 49-70 (ELET…EKLR), 71-92 (NIHS…ACIT), 93-114 (SLRF…LDLQ), and 115-135 (YLQF…DELP). The 43-residue stretch at 146–188 (NPCTNQEGYRKMVIGALPLLLDLDKQPILERWTSDEEDKSSDD) folds into the LRRCT domain. Thr-178 is modified (phosphothreonine). Residues Ser-179, Ser-185, and Ser-186 each carry the phosphoserine modification. The stretch at 203–228 (RGFFKDLEQELHQHQERRQQAALTEH) forms a coiled coil. Residues 249-323 (MAGDCSSTAT…TKMTNKKSTK (75 aa)) are disordered. The segment covering 267–316 (PKATSSTQTASTTKKQVSKNQKSSVQARKGALAATTSKTSQAATPSMTKM) has biased composition (low complexity). Position 303 is a phosphoserine (Ser-303).

In terms of tissue distribution, testis-specific (at protein level).

It localises to the cell projection. The protein localises to the cilium. The protein resides in the flagellum. Its function is as follows. Required for normal spermatogenesis and male fertility. Plays an important role in sperm flagellum biogenesis. The chain is Leucine-rich repeat-containing protein 46 (Lrrc46) from Mus musculus (Mouse).